The following is a 398-amino-acid chain: Cell division protein FtsZ (398 aa).

Residues 21 to 25 (GGGGN), 108 to 110 (GTG), Glu-139, Arg-143, and Asp-187 each bind GTP.

It belongs to the FtsZ family. As to quaternary structure, homodimer. Polymerizes to form a dynamic ring structure in a strictly GTP-dependent manner. Interacts directly with several other division proteins.

The protein localises to the cytoplasm. In terms of biological role, essential cell division protein that forms a contractile ring structure (Z ring) at the future cell division site. The regulation of the ring assembly controls the timing and the location of cell division. One of the functions of the FtsZ ring is to recruit other cell division proteins to the septum to produce a new cell wall between the dividing cells. Binds GTP and shows GTPase activity. This Pseudomonas putida (strain ATCC 47054 / DSM 6125 / CFBP 8728 / NCIMB 11950 / KT2440) protein is Cell division protein FtsZ.